We begin with the raw amino-acid sequence, 288 residues long: Beta-lactamase CARB-3 (288 aa).

The N-terminal stretch at 1 to 17 (MKFLLAFSLLIPSVVFA) is a signal peptide. Ser-65 acts as the Acyl-ester intermediate in catalysis. A disulfide bridge connects residues Cys-72 and Cys-118. Position 229 to 231 (229 to 231 (RSG)) interacts with substrate.

Belongs to the class-A beta-lactamase family.

It carries out the reaction a beta-lactam + H2O = a substituted beta-amino acid. In terms of biological role, hydrolyzes both carbenicillin and oxacillin. The chain is Beta-lactamase CARB-3 (carB3) from Pseudomonas aeruginosa.